Consider the following 326-residue polypeptide: Transposase InsH for insertion sequence element IS5Y (326 aa).

Belongs to the transposase 11 family.

In terms of biological role, involved in the transposition of the insertion sequence IS5. This chain is Transposase InsH for insertion sequence element IS5Y (insH5), found in Escherichia coli (strain K12).